A 123-amino-acid polypeptide reads, in one-letter code: Defensin beta 118 (123 aa).

The signal sequence occupies residues 1 to 19; it reads MKLLLLALPVLVLLPQVIP. 3 disulfide bridges follow: Cys-27-Cys-54, Cys-34-Cys-48, and Cys-38-Cys-55. Residues 65–123 constitute a propeptide that is removed on maturation; the sequence is VPMTSPTPLSDSTPGIIDDILTVRFTTDYFEVSSKKDMVEESEAGRGTETSLPNVHHSS. The span at 100–110 shows a compositional bias: basic and acidic residues; it reads KDMVEESEAGR. The interval 100–123 is disordered; sequence KDMVEESEAGRGTETSLPNVHHSS. A compositionally biased stretch (polar residues) spans 112–123; sequence TETSLPNVHHSS.

The protein belongs to the beta-defensin family. Post-translationally, the three-dimensional structure formed by the three intramolecular disulfide bridges is indispensable for antimicrobial activity.

Its subcellular location is the secreted. Host defense peptide that exhibits antimicrobial activity against both Gram-negative bacteria, such as E.coli and S.typhimurium, and Gram-positive bacteria, such as S.aureus and B.subtilis. Inhibits cell adhesion of E.coli on intestinal epithelial enterocytes. Causes rapid permeabilization of both the outer and inner membrane of E.coli, leading to morphological alterations on the bacterial surface. Binds to bacterial lipopolysaccharides (LPS) with high affinity, and may thereby be involved in immunoregulation through LPS neutralization. May contribute to epididymal innate immunity and protect the sperm against attack by microorganisms. The sequence is that of Defensin beta 118 (DEFB118) from Pan troglodytes (Chimpanzee).